A 345-amino-acid chain; its full sequence is UDP-3-O-acylglucosamine N-acyltransferase (345 aa).

The active-site Proton acceptor is histidine 241.

The protein belongs to the transferase hexapeptide repeat family. LpxD subfamily. Homotrimer.

The enzyme catalyses a UDP-3-O-[(3R)-3-hydroxyacyl]-alpha-D-glucosamine + a (3R)-hydroxyacyl-[ACP] = a UDP-2-N,3-O-bis[(3R)-3-hydroxyacyl]-alpha-D-glucosamine + holo-[ACP] + H(+). It functions in the pathway bacterial outer membrane biogenesis; LPS lipid A biosynthesis. Its function is as follows. Catalyzes the N-acylation of UDP-3-O-acylglucosamine using 3-hydroxyacyl-ACP as the acyl donor. Is involved in the biosynthesis of lipid A, a phosphorylated glycolipid that anchors the lipopolysaccharide to the outer membrane of the cell. In Desulfotalea psychrophila (strain LSv54 / DSM 12343), this protein is UDP-3-O-acylglucosamine N-acyltransferase.